We begin with the raw amino-acid sequence, 496 residues long: Probable E3 ubiquitin-protein ligase ARI12 (496 aa).

Residues 110-319 (NEYFCGACGE…GDLHFCTFDA (210 aa)) are TRIAD supradomain. C114, C117, C131, H133, C136, C139, C162, C172, C240, C243, H248, C253, C267, C270, C286, and C289 together coordinate Zn(2+). An RING-type 1 zinc finger spans residues 114 to 172 (CGACGESHPHKNLASVSCGHRICTRCWTSHINKIISEKPAAEWNLWLKCPVRVGLHASC). The IBR-type zinc finger occupies 191–253 (FNYNQYLLRS…REDAHSPVDC (63 aa)). An RING-type 2; atypical zinc finger spans residues 267–297 (CPKCKLRIPRNQDNSLKMKCLPCNYVFCWFC).

This sequence belongs to the RBR family. Ariadne subfamily. Zn(2+) is required as a cofactor. As to expression, preferentially expressed in roots.

The enzyme catalyses [E2 ubiquitin-conjugating enzyme]-S-ubiquitinyl-L-cysteine + [acceptor protein]-L-lysine = [E2 ubiquitin-conjugating enzyme]-L-cysteine + [acceptor protein]-N(6)-ubiquitinyl-L-lysine.. The protein operates within protein modification; protein ubiquitination. Might act as an E3 ubiquitin-protein ligase, or as part of E3 complex, which accepts ubiquitin from specific E2 ubiquitin-conjugating enzymes and then transfers it to substrates. The chain is Probable E3 ubiquitin-protein ligase ARI12 (ARI12) from Arabidopsis thaliana (Mouse-ear cress).